The chain runs to 516 residues: Putative thymidine phosphorylase (516 aa).

The protein belongs to the thymidine/pyrimidine-nucleoside phosphorylase family. Type 2 subfamily.

The enzyme catalyses thymidine + phosphate = 2-deoxy-alpha-D-ribose 1-phosphate + thymine. The polypeptide is Putative thymidine phosphorylase (Methylococcus capsulatus (strain ATCC 33009 / NCIMB 11132 / Bath)).